The primary structure comprises 196 residues: Probable malonic semialdehyde reductase RutE (196 aa).

The protein belongs to the nitroreductase family. HadB/RutE subfamily. It depends on FMN as a cofactor.

The enzyme catalyses 3-hydroxypropanoate + NADP(+) = 3-oxopropanoate + NADPH + H(+). May reduce toxic product malonic semialdehyde to 3-hydroxypropionic acid, which is excreted. This Escherichia coli O7:K1 (strain IAI39 / ExPEC) protein is Probable malonic semialdehyde reductase RutE.